The following is a 570-amino-acid chain: 5-aminolevulinate synthase, mitochondrial (570 aa).

The N-terminal 53 residues, Met1–Tyr53, are a transit peptide targeting the mitochondrion. Substrate-binding residues include Arg119, Ser232, and Lys251. The pyridoxal 5'-phosphate site is built by Ser284, His312, and Thr356. The active site involves Lys359. Lys359 bears the N6-(pyridoxal phosphate)lysine mark. Pyridoxal 5'-phosphate contacts are provided by Thr388 and Thr389. Position 474 (Thr474) interacts with substrate.

This sequence belongs to the class-II pyridoxal-phosphate-dependent aminotransferase family. As to quaternary structure, homodimer. Pyridoxal 5'-phosphate serves as cofactor.

The protein localises to the mitochondrion matrix. The enzyme catalyses succinyl-CoA + glycine + H(+) = 5-aminolevulinate + CO2 + CoA. Its pathway is porphyrin-containing compound metabolism; protoporphyrin-IX biosynthesis; 5-aminolevulinate from glycine: step 1/1. Its function is as follows. Catalyzes the synthesis of 5-aminolevulinate (ALA) from succinyl-CoA and glycine, the first and rate-limiting step in heme biosynthesis. The polypeptide is 5-aminolevulinate synthase, mitochondrial (HEM1) (Kluyveromyces lactis (strain ATCC 8585 / CBS 2359 / DSM 70799 / NBRC 1267 / NRRL Y-1140 / WM37) (Yeast)).